Consider the following 433-residue polypeptide: Dihydrolipoyllysine-residue acetyltransferase component of pyruvate dehydrogenase complex (433 aa).

Residues 2–77 (AFEFRLPDIG…VVGDVIVKID (76 aa)) form the Lipoyl-binding domain. N6-lipoyllysine is present on Lys-43. Disordered stretches follow at residues 80 to 134 (DAEE…PSVR) and 164 to 204 (YLNG…FPET). 2 stretches are compositionally biased toward basic and acidic residues: residues 84–103 (MQFK…KEQE) and 117–126 (EKTEVDESKT). Residues 128–165 (KAMPSVRKYARENGVNIKAVNGSGKNGRITKEDIDAYL) enclose the Peripheral subunit-binding (PSBD) domain. Residues 166–185 (NGGSSEEGSNTSAASESTSS) are compositionally biased toward low complexity. The active site involves His-404.

The protein belongs to the 2-oxoacid dehydrogenase family. In terms of assembly, forms a 24-polypeptide structural core with octahedral symmetry. Requires (R)-lipoate as cofactor.

It catalyses the reaction N(6)-[(R)-dihydrolipoyl]-L-lysyl-[protein] + acetyl-CoA = N(6)-[(R)-S(8)-acetyldihydrolipoyl]-L-lysyl-[protein] + CoA. In terms of biological role, the pyruvate dehydrogenase complex catalyzes the overall conversion of pyruvate to acetyl-CoA and CO(2). It contains multiple copies of three enzymatic components: pyruvate dehydrogenase (E1), dihydrolipoamide acetyltransferase (E2) and lipoamide dehydrogenase (E3). This is Dihydrolipoyllysine-residue acetyltransferase component of pyruvate dehydrogenase complex (pdhC) from Staphylococcus epidermidis (strain ATCC 35984 / DSM 28319 / BCRC 17069 / CCUG 31568 / BM 3577 / RP62A).